Consider the following 920-residue polypeptide: DNA ligase (920 aa).

Residues 90–94, 139–140, and Glu-173 contribute to the NAD(+) site; these read DAAYD and SL. Lys-175 functions as the N6-AMP-lysine intermediate in the catalytic mechanism. NAD(+)-binding residues include Arg-196, Glu-235, Lys-360, and Lys-384. Residues Cys-481, Cys-484, Cys-500, and Cys-506 each contribute to the Zn(2+) site. Residues 662-691 are disordered; sequence GEAAIESAETQGDTASETTGAPTGAEAPLG. A compositionally biased stretch (polar residues) spans 669–682; the sequence is AETQGDTASETTGA. One can recognise a BRCT domain in the interval 839–920; sequence SLPQTLAGKT…FAQLLATGTI (82 aa).

Belongs to the NAD-dependent DNA ligase family. LigA subfamily. Mg(2+) is required as a cofactor. Requires Mn(2+) as cofactor.

It carries out the reaction NAD(+) + (deoxyribonucleotide)n-3'-hydroxyl + 5'-phospho-(deoxyribonucleotide)m = (deoxyribonucleotide)n+m + AMP + beta-nicotinamide D-nucleotide.. In terms of biological role, DNA ligase that catalyzes the formation of phosphodiester linkages between 5'-phosphoryl and 3'-hydroxyl groups in double-stranded DNA using NAD as a coenzyme and as the energy source for the reaction. It is essential for DNA replication and repair of damaged DNA. This is DNA ligase from Bifidobacterium longum (strain DJO10A).